The following is a 432-amino-acid chain: Cytoplasmic 60S subunit biogenesis factor REH1 (432 aa).

The C2H2-type 1 zinc finger occupies 6 to 30 (FTCNCCVIQFKTSDLQRYHMKTEWH). Residues 79-150 (QSNALPQKQK…NTDYGEDTVS (72 aa)) form a disordered region. Over residues 86 to 98 (KQKKPIKSKRGRK) the composition is skewed to basic residues. The segment covering 105–117 (KRKDRDIAKEKQN) has biased composition (basic and acidic residues). Positions 118–143 (RSVSPSGSISSQLSNLTVGTENTNTD) are enriched in polar residues. C2H2-type zinc fingers lie at residues 186-209 (TECI…FSEH) and 237-261 (HNCL…SKRH).

This sequence belongs to the REI1 family. As to quaternary structure, associates with nascent pre-60S particles that have not yet entered the translating pool, and is released from mature 60S subunits. Interacts with pre-60S factors NMD3, LSG1, and TIF6.

Its subcellular location is the cytoplasm. In terms of biological role, pre-60S-associated cytoplasmic factor involved in the cytoplasmic maturation of the 60S subunit. May act redundantly with REI1 to directly promote a stabilizing structural rearrangement in cytoplasmic 60S subunit maturation independent on the REI1-specific ARX1 recycling. This Saccharomyces cerevisiae (strain ATCC 204508 / S288c) (Baker's yeast) protein is Cytoplasmic 60S subunit biogenesis factor REH1 (REH1).